The primary structure comprises 54 residues: Large ribosomal subunit protein bL33A (54 aa).

It belongs to the bacterial ribosomal protein bL33 family.

The protein is Large ribosomal subunit protein bL33A of Mesoplasma florum (strain ATCC 33453 / NBRC 100688 / NCTC 11704 / L1) (Acholeplasma florum).